We begin with the raw amino-acid sequence, 474 residues long: tRNA-2-methylthio-N(6)-dimethylallyladenosine synthase (474 aa).

An MTTase N-terminal domain is found at 3–120 (KKLHIKTWGC…LPEMIEQVRR (118 aa)). 6 residues coordinate [4Fe-4S] cluster: cysteine 12, cysteine 49, cysteine 83, cysteine 157, cysteine 161, and cysteine 164. One can recognise a Radical SAM core domain in the interval 143-375 (RAEGPTAFVS…QDRITQQAMR (233 aa)). Residues 378 to 441 (RHMMGTVQRI…TNSLRGKFIR (64 aa)) enclose the TRAM domain.

The protein belongs to the methylthiotransferase family. MiaB subfamily. Monomer. [4Fe-4S] cluster serves as cofactor.

It localises to the cytoplasm. The catalysed reaction is N(6)-dimethylallyladenosine(37) in tRNA + (sulfur carrier)-SH + AH2 + 2 S-adenosyl-L-methionine = 2-methylsulfanyl-N(6)-dimethylallyladenosine(37) in tRNA + (sulfur carrier)-H + 5'-deoxyadenosine + L-methionine + A + S-adenosyl-L-homocysteine + 2 H(+). Functionally, catalyzes the methylthiolation of N6-(dimethylallyl)adenosine (i(6)A), leading to the formation of 2-methylthio-N6-(dimethylallyl)adenosine (ms(2)i(6)A) at position 37 in tRNAs that read codons beginning with uridine. In Shewanella oneidensis (strain ATCC 700550 / JCM 31522 / CIP 106686 / LMG 19005 / NCIMB 14063 / MR-1), this protein is tRNA-2-methylthio-N(6)-dimethylallyladenosine synthase.